The following is a 428-amino-acid chain: MNDSNKLYDLAQCFIPGGVNSPVRAFQGVDGKPFFVEKAGGAYLYDVDGRAYIDYVGSWGPMILGHRHPVICDALTKAIENGISFGAPTEIEVKMAQLLTQLMPSMDMVRMVNSGTEATMSAIRLARGFTKRDKIIKFEGCYHGHSDCLLVKAGSGALTLGQADSPGVPKDFAQHTLICTYNDLSSVRKNLEDYPKEVAAIIVEPVAGNMNCILPSENFLPGLRQLCDEFGALLIMDEVMTGFRVALGGAQEYYNIKPDLTCLGKIIGGGMPVAAFGGRKEVMSILAPLGPVYQAETLSGHPLGMAAGFACLTELARPGLHKKLTELTTLLVLNLKKAAQEHNIPLIINHLGGMFGFFFTDAKTVTCYEDVKKCNIERFKRFFYFMLKEGIYFAPSAFEAGFMSLAHGVEEIEKTISSARRCFAQSRF.

Lys265 is subject to N6-(pyridoxal phosphate)lysine.

Belongs to the class-III pyridoxal-phosphate-dependent aminotransferase family. HemL subfamily. As to quaternary structure, homodimer. Requires pyridoxal 5'-phosphate as cofactor.

The protein resides in the cytoplasm. The catalysed reaction is (S)-4-amino-5-oxopentanoate = 5-aminolevulinate. It participates in porphyrin-containing compound metabolism; protoporphyrin-IX biosynthesis; 5-aminolevulinate from L-glutamyl-tRNA(Glu): step 2/2. The chain is Glutamate-1-semialdehyde 2,1-aminomutase from Hamiltonella defensa subsp. Acyrthosiphon pisum (strain 5AT).